We begin with the raw amino-acid sequence, 304 residues long: Small ribosomal subunit biogenesis GTPase RsgA (304 aa).

The 160-residue stretch at 70-229 folds into the CP-type G domain; sequence HNELNRPNIA…IADTPGFSKL (160 aa). Residues 119–122 and 172–180 contribute to the GTP site; these read TKID and GQTGVGKST. Residues C253, C259, H261, and C267 each coordinate Zn(2+).

The protein belongs to the TRAFAC class YlqF/YawG GTPase family. RsgA subfamily. As to quaternary structure, monomer. Associates with 30S ribosomal subunit, binds 16S rRNA. Zn(2+) is required as a cofactor.

The protein localises to the cytoplasm. In terms of biological role, one of several proteins that assist in the late maturation steps of the functional core of the 30S ribosomal subunit. Helps release RbfA from mature subunits. May play a role in the assembly of ribosomal proteins into the subunit. Circularly permuted GTPase that catalyzes slow GTP hydrolysis, GTPase activity is stimulated by the 30S ribosomal subunit. This Phytoplasma mali (strain AT) protein is Small ribosomal subunit biogenesis GTPase RsgA.